The sequence spans 864 residues: Mitochondrial 15S rRNA processing factor CCM1 (864 aa).

The N-terminal 76 residues, 1-76 (MYMARCGPKN…REFSNTLKER (76 aa)), are a transit peptide targeting the mitochondrion. PPR repeat units lie at residues 319 to 353 (NKQN…STKH) and 356 to 390 (DICT…NIKP).

This sequence belongs to the CCM1 family. As to quaternary structure, binds to mitochondrial small subunit 15S rRNA.

It is found in the mitochondrion. Its function is as follows. Regulates mitochondrial small subunit maturation by controlling 15S rRNA 5'-end processing. Localizes to the 5' precursor of the 15S rRNA in a position that is subsequently occupied by mS47 in the mature yeast mtSSU. Uses structure and sequence-specific RNA recognition, binding to a single-stranded region of the precursor and specifically recognizing bases -6 to -1. The exchange of Ccm1 for mS47 is coupled to the irreversible removal of precursor rRNA that is accompanied by conformational changes of the mitoribosomal proteins uS5m and mS26. These conformational changes signal completion of 5'-end rRNA processing through protection of the mature 5'-end of the 15S rRNA and stabilization of mS47. The removal of the 5' precursor together with the dissociation of Ccm1 may be catalyzed by the 5'-3' exoribonuclease Pet127. Involved in the specific removal of group I introns in mitochondrial encoded transcripts. In Saccharomyces cerevisiae (strain RM11-1a) (Baker's yeast), this protein is Mitochondrial 15S rRNA processing factor CCM1 (CCM1).